The following is a 194-amino-acid chain: uncharacterized protein (194 aa).

The 159-residue stretch at 34 to 192 (VMQCLLGGNK…CELVDQTLFP (159 aa)) folds into the SIS domain.

It belongs to the SIS family. DiaA subfamily.

This is an uncharacterized protein from Haemophilus influenzae (strain ATCC 51907 / DSM 11121 / KW20 / Rd).